We begin with the raw amino-acid sequence, 208 residues long: Probable GTP-binding protein EngB (208 aa).

The EngB-type G domain maps to leucine 23–threonine 205. Residues glycine 31 to serine 38, glycine 57 to leucine 61, aspartate 84 to glycine 87, threonine 154 to aspartate 157, and phenylalanine 182 to alanine 184 contribute to the GTP site. The Mg(2+) site is built by serine 38 and threonine 59.

This sequence belongs to the TRAFAC class TrmE-Era-EngA-EngB-Septin-like GTPase superfamily. EngB GTPase family. The cofactor is Mg(2+).

In terms of biological role, necessary for normal cell division and for the maintenance of normal septation. This is Probable GTP-binding protein EngB from Helicobacter pylori (strain J99 / ATCC 700824) (Campylobacter pylori J99).